Reading from the N-terminus, the 227-residue chain is 2,3-bisphosphoglycerate-dependent phosphoglycerate mutase (227 aa).

Substrate-binding positions include 7 to 14 (RHGFSEWN), 20 to 21 (TG), R59, 86 to 89 (ERHY), K97, 113 to 114 (RR), and 182 to 183 (GN). H8 acts as the Tele-phosphohistidine intermediate in catalysis. The active-site Proton donor/acceptor is the E86.

It belongs to the phosphoglycerate mutase family. BPG-dependent PGAM subfamily. As to quaternary structure, homodimer.

It carries out the reaction (2R)-2-phosphoglycerate = (2R)-3-phosphoglycerate. The protein operates within carbohydrate degradation; glycolysis; pyruvate from D-glyceraldehyde 3-phosphate: step 3/5. Catalyzes the interconversion of 2-phosphoglycerate and 3-phosphoglycerate. In Histophilus somni (strain 129Pt) (Haemophilus somnus), this protein is 2,3-bisphosphoglycerate-dependent phosphoglycerate mutase.